Here is a 292-residue protein sequence, read N- to C-terminus: Putative phosphatase MPN_381 (292 aa).

The active-site Nucleophile is the aspartate 11. Aspartate 11 provides a ligand contact to Mg(2+). A phosphate-binding site is contributed by leucine 12. Aspartate 13 contributes to the Mg(2+) binding site. Phosphate-binding positions include 60-61 (TG) and lysine 217. Aspartate 242 contributes to the Mg(2+) binding site. Residue asparagine 245 coordinates phosphate.

The protein belongs to the HAD-like hydrolase superfamily. Cof family. It depends on Mg(2+) as a cofactor.

This Mycoplasma pneumoniae (strain ATCC 29342 / M129 / Subtype 1) (Mycoplasmoides pneumoniae) protein is Putative phosphatase MPN_381.